The primary structure comprises 597 residues: DNA primase (597 aa).

Zn(2+) contacts are provided by Cys-40, His-43, Cys-61, and Cys-64. A CHC2-type zinc finger spans residues 40–64 (CPFHGEKTPSFSVSPEKQIFHCFGC). The 81-residue stretch at 262-342 (QEALLVEGFA…RVKVASLPNG (81 aa)) folds into the Toprim domain. 3 residues coordinate Mg(2+): Glu-268, Asp-311, and Asp-313. Over residues 429 to 447 (LSRSQRERTKPREAPDGET) the composition is skewed to basic and acidic residues. A disordered region spans residues 429–448 (LSRSQRERTKPREAPDGETA).

Belongs to the DnaG primase family. In terms of assembly, monomer. Interacts with replicative helicase DnaB, as DnaB(6):DnaG(3). A stable complex DnaI(6):DnaB(6):DnaG(3) fragment can be isolated; DnaI and DnaG do not contact each other (DnaI in this complex is derived from B.subtilis). Requires Zn(2+) as cofactor. It depends on Mg(2+) as a cofactor.

The catalysed reaction is ssDNA + n NTP = ssDNA/pppN(pN)n-1 hybrid + (n-1) diphosphate.. Its function is as follows. RNA polymerase that catalyzes the synthesis of short RNA molecules used as primers for DNA polymerase during DNA replication. The polypeptide is DNA primase (Geobacillus stearothermophilus (Bacillus stearothermophilus)).